The following is a 463-amino-acid chain: Asparagine--tRNA ligase (463 aa).

This sequence belongs to the class-II aminoacyl-tRNA synthetase family. In terms of assembly, homodimer.

Its subcellular location is the cytoplasm. It carries out the reaction tRNA(Asn) + L-asparagine + ATP = L-asparaginyl-tRNA(Asn) + AMP + diphosphate + H(+). This is Asparagine--tRNA ligase from Acholeplasma laidlawii (strain PG-8A).